A 436-amino-acid polypeptide reads, in one-letter code: GTPase Obg (436 aa).

Residues 2–160 enclose the Obg domain; the sequence is SMFLDTAKIQ…RELLLELKVL (159 aa). The OBG-type G domain occupies 161–338; sequence ADVGLVGFPS…LLDATAELLD (178 aa). GTP is bound by residues 167 to 174, 192 to 196, 214 to 217, 284 to 287, and 319 to 321; these read GFPSVGKS, FTTIV, DLPG, NKMD, and SSL. Mg(2+) contacts are provided by Ser-174 and Thr-194. The OCT domain occupies 358–436; the sequence is GFDEEAPAFE…IGKFEFEFVD (79 aa).

It belongs to the TRAFAC class OBG-HflX-like GTPase superfamily. OBG GTPase family. As to quaternary structure, monomer. Requires Mg(2+) as cofactor.

Its subcellular location is the cytoplasm. Functionally, an essential GTPase which binds GTP, GDP and possibly (p)ppGpp with moderate affinity, with high nucleotide exchange rates and a fairly low GTP hydrolysis rate. Plays a role in control of the cell cycle, stress response, ribosome biogenesis and in those bacteria that undergo differentiation, in morphogenesis control. This Streptococcus gordonii (strain Challis / ATCC 35105 / BCRC 15272 / CH1 / DL1 / V288) protein is GTPase Obg.